Consider the following 323-residue polypeptide: Elongation factor P--(R)-beta-lysine ligase (323 aa).

76 to 78 (SPE) contributes to the substrate binding site. Residues 100 to 102 (RNE) and Asn-109 each bind ATP. Tyr-118 contributes to the substrate binding site. Residue 242–243 (EL) coordinates ATP. Glu-249 is a binding site for substrate. Gly-298 contacts ATP.

This sequence belongs to the class-II aminoacyl-tRNA synthetase family. EpmA subfamily. Homodimer.

The enzyme catalyses D-beta-lysine + L-lysyl-[protein] + ATP = N(6)-((3R)-3,6-diaminohexanoyl)-L-lysyl-[protein] + AMP + diphosphate + H(+). Its function is as follows. With EpmB is involved in the beta-lysylation step of the post-translational modification of translation elongation factor P (EF-P). Catalyzes the ATP-dependent activation of (R)-beta-lysine produced by EpmB, forming a lysyl-adenylate, from which the beta-lysyl moiety is then transferred to the epsilon-amino group of a conserved specific lysine residue in EF-P. This is Elongation factor P--(R)-beta-lysine ligase from Actinobacillus succinogenes (strain ATCC 55618 / DSM 22257 / CCUG 43843 / 130Z).